The primary structure comprises 261 residues: MTDPFTSDGAKMPPKPFTIEEGRRQVRSFVLRQGRFTPAQQRAFDELWPRFGLDYTGAPRDLDAVFGRPAPKVLEIGFGNGAALRFAAQHDPARDYIGIEVHAPGVGRLLNALDDDGATHVRLYHHDAVEVLEREIADGALDEVRIYFPDPWHKKRHNKRRLVQPAFAQLLVRKLRDGGRLHAATDWADYAEQMWDVLDATEGLVNRAGPRGHVARPAWRPQTHFETRGQKLGHGVWDLLYDRESGMENRESPGQAPAAPG.

Glutamate 75, glutamate 100, aspartate 127, and aspartate 150 together coordinate S-adenosyl-L-methionine. Aspartate 150 is a catalytic residue. Position 154 (lysine 154) interacts with substrate. An interaction with RNA region spans residues arginine 156–arginine 161. Substrate is bound by residues aspartate 186 and threonine 223–glutamate 226.

The protein belongs to the class I-like SAM-binding methyltransferase superfamily. TrmB family.

The enzyme catalyses guanosine(46) in tRNA + S-adenosyl-L-methionine = N(7)-methylguanosine(46) in tRNA + S-adenosyl-L-homocysteine. It functions in the pathway tRNA modification; N(7)-methylguanine-tRNA biosynthesis. Catalyzes the formation of N(7)-methylguanine at position 46 (m7G46) in tRNA. This is tRNA (guanine-N(7)-)-methyltransferase from Xanthomonas campestris pv. campestris (strain 8004).